A 470-amino-acid polypeptide reads, in one-letter code: Protein naked cuticle homolog 1 (470 aa).

2 disordered regions span residues 1 to 21 and 90 to 114; these read MGKL…PEGD and PPEK…PCPG. Gly-2 carries the N-myristoyl glycine lipid modification. Basic and acidic residues predominate over residues 92–109; the sequence is EKTDGLGSGDEKKMERVS. Residues 125 to 190 form an interaction with DVL1, DVL2 and DVL3 region; it reads QCDVSMEEDS…LRVKLTVAPD (66 aa). In terms of domain architecture, EF-hand spans 131 to 166; sequence EEDSRQEWTFTLYDFDNNGKVTREDITSLLHTIYEV. Ca(2+) contacts are provided by Asp-144, Asp-146, Asn-148, Lys-150, and Asp-155. Residues 192–205 show a composition bias toward polar residues; sequence SQSKRSVLVNQADL. Disordered stretches follow at residues 192 to 228, 271 to 314, 337 to 357, and 446 to 470; these read SQSK…KKQR, QFGP…QGVD, GTQD…KSVG, and GQPV…FYQT. Positions 210 to 227 are enriched in basic and acidic residues; sequence PRAETKPTEDLRSWEKKQ. Over residues 271–281 the composition is skewed to polar residues; it reads QFGPGSPSVAQ. The segment covering 452–470 has biased composition (basic residues); sequence HEHHHHHEHHHHYHHFYQT.

This sequence belongs to the NKD family. Interacts with DVL1, DVL2, DVL3 and PPP2R3A. As to expression, expressed in colon, heart, kidney, leukocyte, liver, lung, ovary, pancreas, placenta, prostate, skeletal muscle, small intestine and spleen.

Its subcellular location is the cell membrane. It is found in the cytoplasm. Its function is as follows. Cell autonomous antagonist of the canonical Wnt signaling pathway. May activate a second Wnt signaling pathway that controls planar cell polarity. This is Protein naked cuticle homolog 1 (NKD1) from Homo sapiens (Human).